Consider the following 451-residue polypeptide: 3-carboxy-cis,cis-muconate cycloisomerase (451 aa).

Belongs to the class-II fumarase/aspartase family.

It catalyses the reaction 2-(carboxymethyl)-5-oxo-2,5-dihydro-2-furoate = 3-carboxy-cis,cis-muconate + H(+). In terms of biological role, catalyzes an anti cycloisomerization. The protein is 3-carboxy-cis,cis-muconate cycloisomerase (pcaB) of Bradyrhizobium diazoefficiens (strain JCM 10833 / BCRC 13528 / IAM 13628 / NBRC 14792 / USDA 110).